The primary structure comprises 867 residues: MVSRSCANFLDLASWDLLDFPQTQRALPRVMTVPGIISELDGGYSDGSSDVNSSNSSRERKIIVANMLPLQAKRDTETGQWCFSWDEDSLLLQLRDGFSSDTEFVYIGSLNADIGISEQEEVSHKLLLDFNCVPTFLPKEMQEKFYLGFCKHHLWPLFHYMLPMFPDHGDRFDRRLWQAYVSANKIFSDRVMEVINPEEDYVWIHDYHLMVLPTFLRKRFNRIKLGFFLHSPFPSSEIYRTLPVRDDLLRGLLNCDLIGFHTFDYARHFLSCCSRMLGLDYESKRGHIGLDYFGRTVFIKILPVGIHMGRLESVLNLPSTAAKMKEIQEQFKGKKLILGVDDMDIFKGISLKLIAMERLFETYWHMRGKLVLIQIVNPARATGKDVEEAKKETYSTAKRINERYGSAGYQPVILIDRLVPRYEKTAYYAMADCCLVNAVRDGMNLVPYKYIICRQGTPGMDKAMGISHDSARTSMLVVSEFIGCSPSLSGAIRVNPWDVDAVAEAVNLALTMGETEKRLRHEKHYHYVSTHDVGYWAKSFMQDLERACREHYNKRCWGIGFGLSFRVLSLSPSFRKLSIDHIVSTYRNTQRRAIFLDYDGTLVPESSIIKTPNAEVLSVLKSLCGDPKNTVFVVSGRGWESLSDWLSPCENLGIAAEHGYFIRWSSKKEWETCYSSAEAEWKTMVEPVMRSYMDATDGSTIEYKESALVWHHQDADPDFGACQAKELLDHLESVLANEPVVVKRGQHIVEVKPQGVSKGLAVEKVIHQMVEDGNPPDMVMCIGDDRSDEDMFESILSTVTNPDLPMPPEIFACTVGRKPSKAKYFLDDVSDVLKLLGGLAAATSSSKPEYQQQSSSLHTQVAFESII.

At S5 the chain carries Phosphoserine. T32 carries the post-translational modification Phosphothreonine. The glycosyltransferase stretch occupies residues 59-546; sequence ERKIIVANML…AKSFMQDLER (488 aa).

The protein in the N-terminal section; belongs to the glycosyltransferase 20 family. This sequence in the C-terminal section; belongs to the trehalose phosphatase family.

The catalysed reaction is D-glucose 6-phosphate + UDP-alpha-D-glucose = alpha,alpha-trehalose 6-phosphate + UDP + H(+). The sequence is that of Probable alpha,alpha-trehalose-phosphate synthase [UDP-forming] 9 (TPS9) from Arabidopsis thaliana (Mouse-ear cress).